Consider the following 72-residue polypeptide: Translation initiation factor IF-1 (72 aa).

One can recognise an S1-like domain in the interval 1 to 72; the sequence is MPKEEVLEFP…TKGRITYRFK (72 aa).

The protein belongs to the IF-1 family. As to quaternary structure, component of the 30S ribosomal translation pre-initiation complex which assembles on the 30S ribosome in the order IF-2 and IF-3, IF-1 and N-formylmethionyl-tRNA(fMet); mRNA recruitment can occur at any time during PIC assembly.

It is found in the cytoplasm. In terms of biological role, one of the essential components for the initiation of protein synthesis. Stabilizes the binding of IF-2 and IF-3 on the 30S subunit to which N-formylmethionyl-tRNA(fMet) subsequently binds. Helps modulate mRNA selection, yielding the 30S pre-initiation complex (PIC). Upon addition of the 50S ribosomal subunit IF-1, IF-2 and IF-3 are released leaving the mature 70S translation initiation complex. The protein is Translation initiation factor IF-1 of Rhizobium etli (strain ATCC 51251 / DSM 11541 / JCM 21823 / NBRC 15573 / CFN 42).